The primary structure comprises 688 residues: NADH-ubiquinone oxidoreductase 75 kDa subunit (688 aa).

Residues 1 to 85 (MLIRFKINEI…DESIETEIDE (85 aa)) enclose the 2Fe-2S ferredoxin-type domain. The [2Fe-2S] cluster site is built by C38, C49, C52, and C66. In terms of domain architecture, 4Fe-4S His(Cys)3-ligated-type spans 85–124 (EILKAREGVMEFLLINHPLDCPICDQGGECDLQEQTIAYG). H101, C105, C108, C114, C153, C156, C159, and C204 together coordinate [4Fe-4S] cluster. Residues 223-279 (LKNIKGIDIFDTVLTPINYQVKGGEIFRILPRINDRLNEEWITDKVRFHYESYKIIE) form the 4Fe-4S Mo/W bis-MGD-type domain.

This sequence belongs to the complex I 75 kDa subunit family. As to quaternary structure, complex I is composed of about 45 different subunits. The cofactor is [2Fe-2S] cluster. [4Fe-4S] cluster serves as cofactor.

It is found in the mitochondrion inner membrane. It carries out the reaction a ubiquinone + NADH + 5 H(+)(in) = a ubiquinol + NAD(+) + 4 H(+)(out). In terms of biological role, core subunit of the mitochondrial membrane respiratory chain NADH dehydrogenase (Complex I) that is believed to belong to the minimal assembly required for catalysis. Complex I functions in the transfer of electrons from NADH to the respiratory chain. The immediate electron acceptor for the enzyme is believed to be ubiquinone. This is the largest subunit of complex I and it is a component of the iron-sulfur (IP) fragment of the enzyme. It may form part of the active site crevice where NADH is oxidized. The sequence is that of NADH-ubiquinone oxidoreductase 75 kDa subunit (nad11) from Dictyostelium citrinum (Slime mold).